Reading from the N-terminus, the 182-residue chain is Ribosome-recycling factor (182 aa).

This sequence belongs to the RRF family.

The protein localises to the cytoplasm. Its function is as follows. Responsible for the release of ribosomes from messenger RNA at the termination of protein biosynthesis. May increase the efficiency of translation by recycling ribosomes from one round of translation to another. The sequence is that of Ribosome-recycling factor from Prochlorococcus marinus (strain SARG / CCMP1375 / SS120).